The sequence spans 90 residues: Small ribosomal subunit protein bS16 (90 aa).

It belongs to the bacterial ribosomal protein bS16 family.

The protein is Small ribosomal subunit protein bS16 of Lysinibacillus sphaericus (strain C3-41).